Here is a 283-residue protein sequence, read N- to C-terminus: 1D-myo-inositol 2-acetamido-2-deoxy-alpha-D-glucopyranoside deacetylase (283 aa).

Zn(2+) is bound by residues histidine 15, aspartate 18, and histidine 150.

This sequence belongs to the MshB deacetylase family. Zn(2+) is required as a cofactor.

It catalyses the reaction 1D-myo-inositol 2-acetamido-2-deoxy-alpha-D-glucopyranoside + H2O = 1D-myo-inositol 2-amino-2-deoxy-alpha-D-glucopyranoside + acetate. In terms of biological role, catalyzes the deacetylation of 1D-myo-inositol 2-acetamido-2-deoxy-alpha-D-glucopyranoside (GlcNAc-Ins) in the mycothiol biosynthesis pathway. The chain is 1D-myo-inositol 2-acetamido-2-deoxy-alpha-D-glucopyranoside deacetylase from Actinosynnema mirum (strain ATCC 29888 / DSM 43827 / JCM 3225 / NBRC 14064 / NCIMB 13271 / NRRL B-12336 / IMRU 3971 / 101).